Reading from the N-terminus, the 132-residue chain is uncharacterized protein (132 aa).

Residue Lys-59 forms a Glycyl lysine isopeptide (Lys-Gly) (interchain with G-Cter in SAMP2) linkage.

The protein belongs to the OsmC/Ohr family.

This is an uncharacterized protein from Haloferax volcanii (strain ATCC 29605 / DSM 3757 / JCM 8879 / NBRC 14742 / NCIMB 2012 / VKM B-1768 / DS2) (Halobacterium volcanii).